The chain runs to 365 residues: MAITATQNDGVSLNANKISYDLVETDVEIITSGRRSIPAHSGILASVSPVLTNIIEKPRKIHGGSSKKVIKILGVPCDAVSVFVRFLYSPSVTENEMEKYGIHLLALSHVYMVTQLKQRCTKGVGERVTAENVVDILQLARLCDAPDLCLKCMRFIHYKFKTVEQTEGWKFLQEHDPFLELDILQFIDDAESRKKRRRRHRREQNLYLQLSEAMECIEHICTEGCTLVGPSSNLDNKSTCQAKPGPCSAFSTCYGLQLLIRHFAVCKKRVDGKGCVRCKRMIQLLRLHSSICDQSESCRVPLCRQYKNRGEKDKKMVEDTKWKVLVRRVASAKAMSSLSQSKKKKSEVLFKEEAEDLIRIRNKLM.

The region spanning 25 to 96 (TDVEIITSGR…LYSPSVTENE (72 aa)) is the BTB domain. The short motif at 193–202 (RKKRRRRHRR) is the Nuclear localization signal element. The TAZ-type zinc finger occupies 205–304 (NLYLQLSEAM…SESCRVPLCR (100 aa)). The tract at residues 315 to 338 (KMVEDTKWKVLVRRVASAKAMSSL) is caM-binding.

Interacts with CUL3A. Interacts with GTE9/BET9 and GTE11/BET10 through the BTB domain. Preferentially expressed in young leaves, roots and stems.

Its subcellular location is the nucleus. It localises to the cytoplasm. Its pathway is protein modification; protein ubiquitination. Its function is as follows. May act as a substrate-specific adapter of an E3 ubiquitin-protein ligase complex (CUL3-RBX1-BTB) which mediates the ubiquitination and subsequent proteasomal degradation of target proteins. Also targeted for degradation by the 26S proteasome pathway. May be involved in gametophyte development. The polypeptide is BTB/POZ and TAZ domain-containing protein 1 (BT1) (Arabidopsis thaliana (Mouse-ear cress)).